A 333-amino-acid chain; its full sequence is Adenosine deaminase (333 aa).

Zn(2+)-binding residues include histidine 12 and histidine 14. Histidine 14, aspartate 16, and glycine 170 together coordinate substrate. Histidine 197 is a Zn(2+) binding site. Catalysis depends on glutamate 200, which acts as the Proton donor. Zn(2+) is bound at residue aspartate 278. Aspartate 279 lines the substrate pocket.

It belongs to the metallo-dependent hydrolases superfamily. Adenosine and AMP deaminases family. Adenosine deaminase subfamily. The cofactor is Zn(2+).

It carries out the reaction adenosine + H2O + H(+) = inosine + NH4(+). It catalyses the reaction 2'-deoxyadenosine + H2O + H(+) = 2'-deoxyinosine + NH4(+). In terms of biological role, catalyzes the hydrolytic deamination of adenosine and 2-deoxyadenosine. The polypeptide is Adenosine deaminase (Proteus mirabilis (strain HI4320)).